A 143-amino-acid polypeptide reads, in one-letter code: Glutamate-rich protein 4 (143 aa).

Acidic residues predominate over residues 90–106 (LEEEEEDDDEEEQEEEG). Positions 90–143 (LEEEEEDDDEEEQEEEGEGKNCVEENKGLQGKQGEKCSGNPYPAQRLPDFEMTI) are disordered. The span at 107 to 116 (EGKNCVEENK) shows a compositional bias: basic and acidic residues.

In Rattus norvegicus (Rat), this protein is Glutamate-rich protein 4 (Erich4).